We begin with the raw amino-acid sequence, 127 residues long: Large ribosomal subunit protein bL12 (127 aa).

Positions 94–114 (VDGAPSTLKEAASKEEAEEAK) are disordered. Over residues 104 to 114 (AASKEEAEEAK) the composition is skewed to basic and acidic residues.

The protein belongs to the bacterial ribosomal protein bL12 family. As to quaternary structure, homodimer. Part of the ribosomal stalk of the 50S ribosomal subunit. Forms a multimeric L10(L12)X complex, where L10 forms an elongated spine to which 2 to 4 L12 dimers bind in a sequential fashion. Binds GTP-bound translation factors.

In terms of biological role, forms part of the ribosomal stalk which helps the ribosome interact with GTP-bound translation factors. Is thus essential for accurate translation. This Nitratidesulfovibrio vulgaris (strain ATCC 29579 / DSM 644 / CCUG 34227 / NCIMB 8303 / VKM B-1760 / Hildenborough) (Desulfovibrio vulgaris) protein is Large ribosomal subunit protein bL12.